We begin with the raw amino-acid sequence, 361 residues long: DNA replication and repair protein RecF (361 aa).

30–37 (GDNAQGKT) lines the ATP pocket.

This sequence belongs to the RecF family.

It is found in the cytoplasm. Functionally, the RecF protein is involved in DNA metabolism; it is required for DNA replication and normal SOS inducibility. RecF binds preferentially to single-stranded, linear DNA. It also seems to bind ATP. The protein is DNA replication and repair protein RecF of Clostridium botulinum (strain Eklund 17B / Type B).